The primary structure comprises 263 residues: Cell division coordinator CpoB (263 aa).

Residues 1-26 (MSSNFRHQLLSLSLLVGIAAPWAAFA) form the signal peptide. A coiled-coil region spans residues 44–88 (QLERISNAHSQLLTQLQQQLSDNQSDIDSLRGQIQENQYQLNQVV). The segment covering 106–123 (AAAQSTSGDQSGAAASTT) has biased composition (low complexity). A disordered region spans residues 106–139 (AAAQSTSGDQSGAAASTTPTADAGTANAGAPVKS). TPR repeat units follow at residues 143–176 (NTDY…YPDS), 180–213 (PNAN…YPKS), and 217–250 (ADAM…YPGT).

This sequence belongs to the CpoB family. Homotrimer. Interacts directly with the central domain of TolA and with PBP1B. Binding to TolA disrupts the homotrimer to form a YbgF/TolA heterodimer with weak affinity. Forms a quaternary complex with PBP1B-LpoB and TolA.

Its subcellular location is the periplasm. Its function is as follows. Mediates coordination of peptidoglycan synthesis and outer membrane constriction during cell division. Promotes physical and functional coordination of the PBP1B-LpoB and Tol machines, and regulates PBP1B activity in response to Tol energy state. The chain is Cell division coordinator CpoB from Escherichia coli (strain K12).